A 561-amino-acid polypeptide reads, in one-letter code: Glutamate--tRNA ligase (561 aa).

Residues 107-117 (PNPSGPLHLGH) carry the 'HIGH' region motif.

It belongs to the class-I aminoacyl-tRNA synthetase family. Glutamate--tRNA ligase type 2 subfamily.

Its subcellular location is the cytoplasm. It catalyses the reaction tRNA(Glu) + L-glutamate + ATP = L-glutamyl-tRNA(Glu) + AMP + diphosphate. Catalyzes the attachment of glutamate to tRNA(Glu) in a two-step reaction: glutamate is first activated by ATP to form Glu-AMP and then transferred to the acceptor end of tRNA(Glu). The protein is Glutamate--tRNA ligase of Methanoculleus marisnigri (strain ATCC 35101 / DSM 1498 / JR1).